Consider the following 319-residue polypeptide: Acetyl esterase (319 aa).

Positions 91 to 93 (HGG) match the Involved in the stabilization of the negatively charged intermediate by the formation of the oxyanion hole motif. Active-site residues include serine 165, aspartate 262, and histidine 292.

The protein belongs to the 'GDXG' lipolytic enzyme family. Homodimer. Interacts with MalT and MelA.

It localises to the cytoplasm. Its function is as follows. Displays esterase activity towards short chain fatty esters (acyl chain length of up to 8 carbons). Able to hydrolyze triacetylglycerol (triacetin) and tributyrylglycerol (tributyrin), but not trioleylglycerol (triolein) or cholesterol oleate. Negatively regulates MalT activity by antagonizing maltotriose binding. Inhibits MelA galactosidase activity. The polypeptide is Acetyl esterase (Escherichia coli O8 (strain IAI1)).